We begin with the raw amino-acid sequence, 391 residues long: Argininosuccinate synthase (391 aa).

6–14 (AYSGGLDTT) contributes to the ATP binding site. Y84 serves as a coordination point for L-citrulline. Position 114 (G114) interacts with ATP. T116, N120, and D121 together coordinate L-aspartate. N120 serves as a coordination point for L-citrulline. 5 residues coordinate L-citrulline: R124, S171, S180, E253, and Y265.

Belongs to the argininosuccinate synthase family. Type 1 subfamily. As to quaternary structure, homotetramer.

Its subcellular location is the cytoplasm. It carries out the reaction L-citrulline + L-aspartate + ATP = 2-(N(omega)-L-arginino)succinate + AMP + diphosphate + H(+). It participates in amino-acid biosynthesis; L-arginine biosynthesis; L-arginine from L-ornithine and carbamoyl phosphate: step 2/3. The protein is Argininosuccinate synthase of Sulfolobus acidocaldarius (strain ATCC 33909 / DSM 639 / JCM 8929 / NBRC 15157 / NCIMB 11770).